Reading from the N-terminus, the 245-residue chain is Flavin-dependent thymidylate synthase (245 aa).

In terms of domain architecture, ThyX spans 5-210 (IRVKLVNYTK…ELRPIIKWAK (206 aa)). FAD-binding positions include S59, 83-85 (RHR), and Q91. DUMP contacts are provided by residues 80-83 (QLVR), 91-95 (QQSQR), and R149. Residues 83–93 (RHRLASYTQQS) carry the ThyX motif motif. Residues 165–167 (NLR) and H171 contribute to the FAD site. Residue R176 participates in dUMP binding. R176 acts as the Involved in ionization of N3 of dUMP, leading to its activation in catalysis.

It belongs to the thymidylate synthase ThyX family. Homotetramer. FAD serves as cofactor.

The enzyme catalyses dUMP + (6R)-5,10-methylene-5,6,7,8-tetrahydrofolate + NADPH + H(+) = dTMP + (6S)-5,6,7,8-tetrahydrofolate + NADP(+). It functions in the pathway pyrimidine metabolism; dTTP biosynthesis. Catalyzes the reductive methylation of 2'-deoxyuridine-5'-monophosphate (dUMP) to 2'-deoxythymidine-5'-monophosphate (dTMP) while utilizing 5,10-methylenetetrahydrofolate (mTHF) as the methyl donor, and NADPH and FADH(2) as the reductant. The polypeptide is Flavin-dependent thymidylate synthase (Thermococcus kodakarensis (strain ATCC BAA-918 / JCM 12380 / KOD1) (Pyrococcus kodakaraensis (strain KOD1))).